A 540-amino-acid chain; its full sequence is Putative BTB/POZ domain-containing protein R224 (540 aa).

In terms of domain architecture, BTB spans T16–N88. A helical transmembrane segment spans residues I356–I376.

Belongs to the mimivirus BTB/WD family.

The protein localises to the membrane. This chain is Putative BTB/POZ domain-containing protein R224, found in Acanthamoeba polyphaga (Amoeba).